A 330-amino-acid chain; its full sequence is MSTKNFRVSDGDWICPDKKCGNVNFARRTSCNRCGREKTTEAKMMKAGGTEIGKTLAEKSRGLFSANDWQCKTCSNVNWARRSECNMCNTPKYAKLEERTGYGGGFNERENVEYIEREESDGEYDEFGRKKKKYRGKAVGPASILKEVEDKESEGEEEDEDEDLSKYKLDEDEDEDDADLSKYNLDASEEEDSNKKKSNRRSRSKSRSSHSRSSSRSSSPSSSRSRSRSRSRSSSSSQSRSHSGSREHSRSRGSKSRSSSRSHRGSSSPRKRSYSSSSSSPERDRKRSRSRPSSPAVRKKRRTRSRSPERHHRSSSGSTHSGSRSSSKKK.

Position 9 is a phosphoserine (S9). Residues 9-40 (SDGDWICPDKKCGNVNFARRTSCNRCGREKTT) form a RanBP2-type 1 zinc finger. 3 positions are modified to N6-acetyllysine: K18, K54, and K92. The RanBP2-type 2 zinc-finger motif lies at 65–94 (SANDWQCKTCSNVNWARRSECNMCNTPKYA). A disordered region spans residues 117–330 (REESDGEYDE…SGSRSSSKKK (214 aa)). S120, S153, S181, S188, and S193 each carry phosphoserine. The segment covering 150–163 (DKESEGEEEDEDED) has biased composition (acidic residues). Positions 151 to 324 (KESEGEEEDE…SSGSTHSGSR (174 aa)) are required for nuclear targeting. Over residues 196-210 (KKSNRRSRSKSRSSH) the composition is skewed to basic residues. Composition is skewed to low complexity over residues 211–224 (SRSSSRSSSPSSSR) and 232–242 (RSSSSSQSRSH). Composition is skewed to basic residues over residues 251–273 (SRGSKSRSSSRSHRGSSSPRKRS) and 297–314 (VRKKRRTRSRSPERHHRS). The span at 315 to 330 (SSGSTHSGSRSSSKKK) shows a compositional bias: low complexity.

Belongs to the ZRANB2 family. Interacts with the C-terminal half of SNRNP70, the Arg/Ser-rich domain of AKAP17A as well as with U2AF1 and CLK1.

The protein resides in the nucleus. Functionally, splice factor required for alternative splicing of TRA2B/SFRS10 transcripts. Binds to ssRNA containing the consensus sequence 5'-AGGUAA-3'. May interfere with constitutive 5'-splice site selection. The chain is Zinc finger Ran-binding domain-containing protein 2 (Zranb2) from Mus musculus (Mouse).